A 184-amino-acid polypeptide reads, in one-letter code: ATP synthase subunit delta (184 aa).

This sequence belongs to the ATPase delta chain family. In terms of assembly, F-type ATPases have 2 components, F(1) - the catalytic core - and F(0) - the membrane proton channel. F(1) has five subunits: alpha(3), beta(3), gamma(1), delta(1), epsilon(1). F(0) has three main subunits: a(1), b(2) and c(10-14). The alpha and beta chains form an alternating ring which encloses part of the gamma chain. F(1) is attached to F(0) by a central stalk formed by the gamma and epsilon chains, while a peripheral stalk is formed by the delta and b chains.

The protein resides in the cell inner membrane. Its function is as follows. F(1)F(0) ATP synthase produces ATP from ADP in the presence of a proton or sodium gradient. F-type ATPases consist of two structural domains, F(1) containing the extramembraneous catalytic core and F(0) containing the membrane proton channel, linked together by a central stalk and a peripheral stalk. During catalysis, ATP synthesis in the catalytic domain of F(1) is coupled via a rotary mechanism of the central stalk subunits to proton translocation. Functionally, this protein is part of the stalk that links CF(0) to CF(1). It either transmits conformational changes from CF(0) to CF(1) or is implicated in proton conduction. The chain is ATP synthase subunit delta from Caulobacter vibrioides (strain NA1000 / CB15N) (Caulobacter crescentus).